The following is a 234-amino-acid chain: Glucosamine-6-phosphate deaminase (234 aa).

The active-site Proton acceptor; for enolization step is the Asp-62. Residue Asn-128 is the For ring-opening step of the active site. Residue His-130 is the Proton acceptor; for ring-opening step of the active site. Glu-135 acts as the For ring-opening step in catalysis.

It belongs to the glucosamine/galactosamine-6-phosphate isomerase family. NagB subfamily.

It carries out the reaction alpha-D-glucosamine 6-phosphate + H2O = beta-D-fructose 6-phosphate + NH4(+). It participates in amino-sugar metabolism; N-acetylneuraminate degradation; D-fructose 6-phosphate from N-acetylneuraminate: step 5/5. Catalyzes the reversible isomerization-deamination of glucosamine 6-phosphate (GlcN6P) to form fructose 6-phosphate (Fru6P) and ammonium ion. This Streptococcus uberis (strain ATCC BAA-854 / 0140J) protein is Glucosamine-6-phosphate deaminase.